Consider the following 434-residue polypeptide: Nicotinate phosphoribosyltransferase (434 aa).

His242 carries the post-translational modification Phosphohistidine; by autocatalysis.

The protein belongs to the NAPRTase family. In terms of processing, transiently phosphorylated on a His residue during the reaction cycle. Phosphorylation strongly increases the affinity for substrates and increases the rate of nicotinate D-ribonucleotide production. Dephosphorylation regenerates the low-affinity form of the enzyme, leading to product release.

The catalysed reaction is nicotinate + 5-phospho-alpha-D-ribose 1-diphosphate + ATP + H2O = nicotinate beta-D-ribonucleotide + ADP + phosphate + diphosphate. The protein operates within cofactor biosynthesis; NAD(+) biosynthesis; nicotinate D-ribonucleotide from nicotinate: step 1/1. In terms of biological role, catalyzes the synthesis of beta-nicotinate D-ribonucleotide from nicotinate and 5-phospho-D-ribose 1-phosphate at the expense of ATP. This is Nicotinate phosphoribosyltransferase from Rhizobium etli (strain ATCC 51251 / DSM 11541 / JCM 21823 / NBRC 15573 / CFN 42).